Here is a 249-residue protein sequence, read N- to C-terminus: Uridylate kinase (249 aa).

Residue 21-24 (KLSG) coordinates ATP. Glycine 63 is a binding site for UMP. Residues glycine 64 and arginine 68 each contribute to the ATP site. UMP-binding positions include aspartate 84 and 145-152 (TGNPFVTT). ATP is bound by residues threonine 172, tyrosine 178, and aspartate 181.

It belongs to the UMP kinase family. Homohexamer.

The protein resides in the cytoplasm. It catalyses the reaction UMP + ATP = UDP + ADP. It participates in pyrimidine metabolism; CTP biosynthesis via de novo pathway; UDP from UMP (UMPK route): step 1/1. With respect to regulation, inhibited by UTP. Functionally, catalyzes the reversible phosphorylation of UMP to UDP. This chain is Uridylate kinase, found in Francisella tularensis subsp. tularensis (strain FSC 198).